The primary structure comprises 142 residues: Small ribosomal subunit protein uS12 (142 aa).

The disordered stretch occupies residues 1–44 (MANGKYAARKLKQDRQKHRWSDSDYARRARGLGKKSDPLEGAPQ). Basic and acidic residues predominate over residues 11-27 (LKQDRQKHRWSDSDYAR).

It belongs to the universal ribosomal protein uS12 family. As to quaternary structure, part of the 30S ribosomal subunit.

In terms of biological role, with S4 and S5 plays an important role in translational accuracy. Located at the interface of the 30S and 50S subunits. This chain is Small ribosomal subunit protein uS12, found in Natronomonas pharaonis (strain ATCC 35678 / DSM 2160 / CIP 103997 / JCM 8858 / NBRC 14720 / NCIMB 2260 / Gabara) (Halobacterium pharaonis).